Consider the following 303-residue polypeptide: MESLKDIRDNIKSVQSTQQVMVTMKMISSARIKKAQNAMLNARPFSLGLEGVIDDLRKDILDENNSFKDPDLSKFFKKPDMEKKNIGVLFITADKGLAGAFNALLLRAALNFIKENQDKNIYFFIIGKKGRDFLSRLKQPNVHIVYDAVGIFPKVGYVHADILGEEIINNFLKLDLCEVRVLYNDFKSMGSQKLENQRLIPFDFEIAQGHTEFGEEEHGFLFEPGKEMIFKLLLYRHIKAGLYRILLESQAAELAARMNAMDSASKNAGEIIDTLKVKLNKVRQSSITNEITEIVGAVEALNK.

The protein belongs to the ATPase gamma chain family. As to quaternary structure, F-type ATPases have 2 components, CF(1) - the catalytic core - and CF(0) - the membrane proton channel. CF(1) has five subunits: alpha(3), beta(3), gamma(1), delta(1), epsilon(1). CF(0) has three main subunits: a, b and c.

Its subcellular location is the cell inner membrane. In terms of biological role, produces ATP from ADP in the presence of a proton gradient across the membrane. The gamma chain is believed to be important in regulating ATPase activity and the flow of protons through the CF(0) complex. The chain is ATP synthase gamma chain from Elusimicrobium minutum (strain Pei191).